The following is a 271-amino-acid chain: Aspartate/glutamate leucyltransferase (271 aa).

It belongs to the R-transferase family. Bpt subfamily.

It localises to the cytoplasm. The catalysed reaction is N-terminal L-glutamyl-[protein] + L-leucyl-tRNA(Leu) = N-terminal L-leucyl-L-glutamyl-[protein] + tRNA(Leu) + H(+). The enzyme catalyses N-terminal L-aspartyl-[protein] + L-leucyl-tRNA(Leu) = N-terminal L-leucyl-L-aspartyl-[protein] + tRNA(Leu) + H(+). Functionally, functions in the N-end rule pathway of protein degradation where it conjugates Leu from its aminoacyl-tRNA to the N-termini of proteins containing an N-terminal aspartate or glutamate. The sequence is that of Aspartate/glutamate leucyltransferase from Acinetobacter baumannii (strain SDF).